The sequence spans 320 residues: Phosphatidylserine decarboxylase proenzyme (320 aa).

Active-site charge relay system; for autoendoproteolytic cleavage activity residues include D90, H147, and S254. S254 acts as the Schiff-base intermediate with substrate; via pyruvic acid; for decarboxylase activity in catalysis. S254 is modified (pyruvic acid (Ser); by autocatalysis). The disordered stretch occupies residues 288–320 (EASTAAEPAPLPEEEIRAEHRASPLVDDTQDQG).

Belongs to the phosphatidylserine decarboxylase family. PSD-B subfamily. Prokaryotic type I sub-subfamily. In terms of assembly, heterodimer of a large membrane-associated beta subunit and a small pyruvoyl-containing alpha subunit. It depends on pyruvate as a cofactor. Post-translationally, is synthesized initially as an inactive proenzyme. Formation of the active enzyme involves a self-maturation process in which the active site pyruvoyl group is generated from an internal serine residue via an autocatalytic post-translational modification. Two non-identical subunits are generated from the proenzyme in this reaction, and the pyruvate is formed at the N-terminus of the alpha chain, which is derived from the carboxyl end of the proenzyme. The autoendoproteolytic cleavage occurs by a canonical serine protease mechanism, in which the side chain hydroxyl group of the serine supplies its oxygen atom to form the C-terminus of the beta chain, while the remainder of the serine residue undergoes an oxidative deamination to produce ammonia and the pyruvoyl prosthetic group on the alpha chain. During this reaction, the Ser that is part of the protease active site of the proenzyme becomes the pyruvoyl prosthetic group, which constitutes an essential element of the active site of the mature decarboxylase.

The protein localises to the cell membrane. It catalyses the reaction a 1,2-diacyl-sn-glycero-3-phospho-L-serine + H(+) = a 1,2-diacyl-sn-glycero-3-phosphoethanolamine + CO2. It functions in the pathway phospholipid metabolism; phosphatidylethanolamine biosynthesis; phosphatidylethanolamine from CDP-diacylglycerol: step 2/2. In terms of biological role, catalyzes the formation of phosphatidylethanolamine (PtdEtn) from phosphatidylserine (PtdSer). The chain is Phosphatidylserine decarboxylase proenzyme from Klebsiella pneumoniae (strain 342).